Consider the following 106-residue polypeptide: uncharacterized protein (106 aa).

This is an uncharacterized protein from Enterobacteria phage T4 (Bacteriophage T4).